A 407-amino-acid chain; its full sequence is RNA-binding motif, single-stranded-interacting protein 2 (407 aa).

At methionine 1 the chain carries N-acetylmethionine. Residues 14–51 (FGYNKNNKKPYVSLSQQMAPPSPSSSTPNSSSGSTAHD) are disordered. Residues 37 to 47 (SSSTPNSSSGS) show a composition bias toward low complexity. RRM domains are found at residues 56 to 129 (TNLY…MAKQ) and 135 to 220 (TNLY…FADG). At serine 106 the chain carries Phosphoserine. 2 positions are modified to phosphoserine: serine 280 and serine 285. The segment covering 374–392 (PSSSVSVEESGSQQSQVPV) has biased composition (low complexity). Residues 374-398 (PSSSVSVEESGSQQSQVPVDAPSEH) form a disordered region.

The protein resides in the nucleus. In Bos taurus (Bovine), this protein is RNA-binding motif, single-stranded-interacting protein 2 (RBMS2).